Here is an 812-residue protein sequence, read N- to C-terminus: G patch domain-containing protein 1 homolog (812 aa).

The segment at 1-42 is disordered; it reads MNRKKLAAYGQEFEDDDEEGSSVSKKPTQIHEEIATDEKGKR. Positions 29–40 are enriched in basic and acidic residues; the sequence is QIHEEIATDEKG. A G-patch domain is found at 145–191; sequence SNSIGVRMLRSMGWREGRGIGLANVKQKQKRGGESSEAQFDREQASK. Disordered stretches follow at residues 384-416 and 584-812; these read ANEVEKRDNERGGGEAEEDRDRRQRNRIEFPDE and NEIE…EEKK. Residues 586-609 show a composition bias toward basic and acidic residues; it reads IEMRERLLKSRAQRGAEEKKRNQS. Composition is skewed to acidic residues over residues 610–630 and 653–668; these read DDDDEKEYDDKDSDEEEENEA and DGADSDESNSEDEEAE. The span at 669–720 shows a compositional bias: basic and acidic residues; the sequence is EKERQEILKKREEDLKRRREIVEKKEEENRKRVEKELKELENRDLLRVSKQQ. A compositionally biased stretch (basic residues) spans 761 to 794; the sequence is MKKKKKDKKEKEKKKKSKKSKKSKKEKKTKRKHS. A compositionally biased stretch (acidic residues) spans 800–812; sequence DSGDNSDGWEEKK.

The protein belongs to the GPATCH1 family.

The chain is G patch domain-containing protein 1 homolog from Caenorhabditis elegans.